The chain runs to 421 residues: Nucleoprotein (421 aa).

Positions 1 to 11 (MSDNGPQSQRS) are enriched in polar residues. Disordered regions lie at residues 1-50 (MSDN…NNTA) and 63-82 (ELRF…GKDD). The tract at residues 41-186 (RPQGLPNNTA…RGGSQSSSRS (146 aa)) is RNA-binding. A CoV N NTD domain is found at 48–175 (NTASWFTALT…TLPKGFYAEG (128 aa)). RNA is bound by residues arginine 92, arginine 107, and arginine 149. Disordered regions lie at residues 168-212 (PKGF…RLAS), 233-271 (KVSG…YNVT), and 361-421 (KTFP…STQA). Serine 176 bears the Phosphoserine; by host mark. Residues 179-212 (GSQSSSRSSSRSRGNSRNSTPGSSRGSSPARLAS) show a composition bias toward low complexity. Residues 237–248 (KGQQQPGQTVTK) show a composition bias toward polar residues. The region spanning 247–364 (TKKSAAEASK…KHIDAYKTFP (118 aa)) is the CoV N CTD domain. The segment at 258 to 361 (PRQKRTATKQ…LLNKHIDAYK (104 aa)) is dimerization. Over residues 367-378 (EPKKDKKKKTDE) the composition is skewed to basic and acidic residues. Positions 405–421 (RQLQHSMSGASADSTQA) are enriched in polar residues.

Belongs to the betacoronavirus nucleocapsid protein family. Homooligomer. Both monomeric and oligomeric forms interact with RNA. Interacts with protein M. Interacts with NSP3; this interaction serves to tether the genome to the newly translated replicase-transcriptase complex at a very early stage of infection. ADP-ribosylated. The ADP-ribosylation is retained in the virion during infection. In terms of processing, phosphorylated on serine and threonine residues.

It is found in the virion. Its subcellular location is the host endoplasmic reticulum-Golgi intermediate compartment. The protein resides in the host Golgi apparatus. Its function is as follows. Packages the positive strand viral genome RNA into a helical ribonucleocapsid (RNP) and plays a fundamental role during virion assembly through its interactions with the viral genome and membrane protein M. Plays an important role in enhancing the efficiency of subgenomic viral RNA transcription as well as viral replication. The polypeptide is Nucleoprotein (Rhinolophus sinicus (Chinese rufous horseshoe bat)).